The primary structure comprises 143 residues: Peptide methionine sulfoxide reductase MsrB (143 aa).

The 124-residue stretch at aspartate 16–arginine 139 folds into the MsrB domain. Residues cysteine 55, cysteine 58, cysteine 104, and cysteine 107 each contribute to the Zn(2+) site. Cysteine 128 (nucleophile) is an active-site residue.

The protein belongs to the MsrB Met sulfoxide reductase family. Requires Zn(2+) as cofactor.

It catalyses the reaction L-methionyl-[protein] + [thioredoxin]-disulfide + H2O = L-methionyl-(R)-S-oxide-[protein] + [thioredoxin]-dithiol. The chain is Peptide methionine sulfoxide reductase MsrB from Burkholderia orbicola (strain MC0-3).